The primary structure comprises 371 residues: Terpene cyclase 6 (371 aa).

Residues Asp144, Asn266, Ser270, and Glu274 each contribute to the Mg(2+) site. A D(D/E)XX(D/E) motif motif is present at residues 144–148 (DDVME). Residues 266–274 (NDLYSYDKE) carry the NSE motif motif. A WxxxxxRY motif motif is present at residues 352–359 (HHATLGRY). Positions 358 and 359 each coordinate (2E,6E)-farnesyl diphosphate.

This sequence belongs to the terpene synthase family. Homodimer. Mg(2+) serves as cofactor.

It carries out the reaction (2E,6E)-farnesyl diphosphate + H2O = (-)-alpha-acorenol + diphosphate. It functions in the pathway sesquiterpene biosynthesis. Functionally, terpene cyclase that catalyzes the cyclization of farnesyl diphosphate (FPP) to the spirocyclic sesquiterpene alpha-acorenol. The polypeptide is Terpene cyclase 6 (Gibberella fujikuroi (strain CBS 195.34 / IMI 58289 / NRRL A-6831) (Bakanae and foot rot disease fungus)).